A 235-amino-acid chain; its full sequence is UDP-2,3-diacylglucosamine hydrolase (235 aa).

Mn(2+) is bound by residues aspartate 9, histidine 11, aspartate 42, asparagine 80, and histidine 115. A substrate-binding site is contributed by 80–81 (NR). Positions 123, 161, 165, 168, and 196 each coordinate substrate. Mn(2+) contacts are provided by histidine 196 and histidine 198.

This sequence belongs to the LpxH family. It depends on Mn(2+) as a cofactor.

Its subcellular location is the cell inner membrane. The catalysed reaction is UDP-2-N,3-O-bis[(3R)-3-hydroxytetradecanoyl]-alpha-D-glucosamine + H2O = 2-N,3-O-bis[(3R)-3-hydroxytetradecanoyl]-alpha-D-glucosaminyl 1-phosphate + UMP + 2 H(+). Its pathway is glycolipid biosynthesis; lipid IV(A) biosynthesis; lipid IV(A) from (3R)-3-hydroxytetradecanoyl-[acyl-carrier-protein] and UDP-N-acetyl-alpha-D-glucosamine: step 4/6. In terms of biological role, hydrolyzes the pyrophosphate bond of UDP-2,3-diacylglucosamine to yield 2,3-diacylglucosamine 1-phosphate (lipid X) and UMP by catalyzing the attack of water at the alpha-P atom. Involved in the biosynthesis of lipid A, a phosphorylated glycolipid that anchors the lipopolysaccharide to the outer membrane of the cell. The protein is UDP-2,3-diacylglucosamine hydrolase of Actinobacillus succinogenes (strain ATCC 55618 / DSM 22257 / CCUG 43843 / 130Z).